The primary structure comprises 187 residues: Cytochrome b-245 chaperone 1 (187 aa).

The helical transmembrane segment at 20-42 threads the bilayer; the sequence is GIRSWSLLVGILSTGLAAAYYSG. The tract at residues 167–187 is disordered; the sequence is ESPSERSQSSDSEPDGPGGQS. 2 positions are modified to phosphoserine: Ser168 and Ser170.

This sequence belongs to the CYBC1 family. Interacts with CYBB; CYBC1 may act as a chaperone stabilizing Cytochrome b-245 heterodimer.

It is found in the endoplasmic reticulum membrane. In terms of biological role, functions as a chaperone necessary for a stable expression of the CYBA and CYBB subunits of the cytochrome b-245 heterodimer. Controls the phagocyte respiratory burst and is essential for innate immunity. This chain is Cytochrome b-245 chaperone 1, found in Mus musculus (Mouse).